A 338-amino-acid chain; its full sequence is Phosphatidate cytidylyltransferase, mitochondrial (338 aa).

The protein belongs to the TAM41 family. It depends on Mg(2+) as a cofactor.

The protein resides in the mitochondrion inner membrane. The enzyme catalyses a 1,2-diacyl-sn-glycero-3-phosphate + CTP + H(+) = a CDP-1,2-diacyl-sn-glycerol + diphosphate. It functions in the pathway phospholipid metabolism; CDP-diacylglycerol biosynthesis; CDP-diacylglycerol from sn-glycerol 3-phosphate: step 3/3. Functionally, catalyzes the conversion of phosphatidic acid (PA) to CDP-diacylglycerol (CDP-DAG), an essential intermediate in the synthesis of phosphatidylglycerol, cardiolipin and phosphatidylinositol. The sequence is that of Phosphatidate cytidylyltransferase, mitochondrial (tamm41) from Xenopus laevis (African clawed frog).